The chain runs to 495 residues: Trimethylamine methyltransferase MttB1 (495 aa).

Position 334 (Pyl334) is a non-standard amino acid, pyrrolysine.

Belongs to the trimethylamine methyltransferase family. In terms of assembly, can form a complex with MttC.

It catalyses the reaction Co(I)-[trimethylamine-specific corrinoid protein] + trimethylamine + H(+) = methyl-Co(III)-[trimethylamine-specific corrinoid protein] + dimethylamine. It functions in the pathway one-carbon metabolism; methanogenesis from trimethylamine. In terms of biological role, catalyzes the transfer of a methyl group from trimethylamine to the corrinoid cofactor of MttC. This chain is Trimethylamine methyltransferase MttB1 (mttB1), found in Methanosarcina mazei (strain ATCC BAA-159 / DSM 3647 / Goe1 / Go1 / JCM 11833 / OCM 88) (Methanosarcina frisia).